The primary structure comprises 273 residues: SAGA-associated factor 29 homolog B (273 aa).

One can recognise an SGF29 C-terminal domain in the interval 128–273 (EAYASLKGEQ…VVALPEGHRQ (146 aa)). 2 histone H3K4me3 N-terminus binding regions span residues 171–173 (DEE) and 220–223 (GTTA). A histone H3K4me3 binding region spans residues 245-248 (FDDD).

It belongs to the SGF29 family. Expressed in roots, rosette leaves, cauline leaves, stems and flowers.

It is found in the nucleus. Functionally, chromatin reader component of the transcription regulatory histone acetylation (HAT) complex SAGA. The polypeptide is SAGA-associated factor 29 homolog B (Arabidopsis thaliana (Mouse-ear cress)).